The chain runs to 3259 residues: Striated muscle-specific serine/threonine-protein kinase (3259 aa).

The segment at methionine 1–glycine 30 is disordered. Arginine 33 is modified (omega-N-methylarginine). Residues proline 45 to threonine 126 form the Ig-like 1 domain. The residue at position 141 (serine 141) is a Phosphoserine. Disordered stretches follow at residues arginine 155–glutamate 185, glutamate 198–histidine 226, proline 278–tyrosine 716, and valine 816–leucine 880. Over residues serine 158–glutamate 185 the composition is skewed to polar residues. Positions proline 301 to proline 317 are enriched in pro residues. A phosphoserine mark is found at serine 368 and serine 375. The residue at position 379 (threonine 379) is a Phosphothreonine. Serine 382 and serine 385 each carry phosphoserine. Residues isoleucine 404 to aspartate 422 show a composition bias toward basic and acidic residues. Serine 423 bears the Phosphoserine mark. Position 453 is a phosphothreonine (threonine 453). A phosphoserine mark is found at serine 457, serine 463, serine 493, serine 511, serine 531, and serine 554. The segment covering glutamate 459–arginine 473 has biased composition (basic and acidic residues). Basic and acidic residues predominate over residues threonine 510–leucine 522. Basic and acidic residues-rich tracts occupy residues proline 624 to proline 638 and glutamate 663 to glutamate 680. The Ig-like 2 domain occupies proline 727–arginine 817. Positions alanine 820 to threonine 830 are enriched in polar residues. 3 consecutive Ig-like domains span residues proline 874–glutamate 963, proline 968–threonine 1056, and proline 1069–tyrosine 1157. Cysteine 994 and cysteine 1046 are disulfide-bonded. Residues serine 1133 and serine 1177 each carry the phosphoserine modification. The tract at residues arginine 1162–glycine 1185 is disordered. One can recognise an Ig-like 6 domain in the interval proline 1193–threonine 1283. Residues proline 1290–histidine 1387 form the Fibronectin type-III 1 domain. A compositionally biased stretch (low complexity) spans serine 1367–serine 1379. Residues serine 1367–glutamate 1386 are disordered. The 89-residue stretch at proline 1490 to serine 1578 folds into the Ig-like 7 domain. Positions tyrosine 1606–phenylalanine 1859 constitute a Protein kinase 1 domain. ATP-binding positions include isoleucine 1612–leucine 1620 and lysine 1635. Aspartate 1724 acts as the Proton acceptor in catalysis. 3 disordered regions span residues methionine 1913–alanine 2244, alanine 2336–leucine 2451, and arginine 2463–asparagine 2562. The segment covering proline 1918 to serine 1927 has biased composition (low complexity). 5 positions are modified to phosphoserine: serine 1993, serine 2004, serine 2019, serine 2020, and serine 2042. Positions serine 2009–serine 2019 are enriched in basic and acidic residues. Arginine 2060 is modified (asymmetric dimethylarginine; alternate). Position 2060 is an omega-N-methylarginine; alternate (arginine 2060). Low complexity predominate over residues alanine 2069–arginine 2081. 2 positions are modified to phosphoserine: serine 2114 and serine 2135. Omega-N-methylarginine is present on arginine 2144. Polar residues predominate over residues glutamate 2168–glutamine 2179. Over residues proline 2180–proline 2189 the composition is skewed to pro residues. Residues serine 2182 and serine 2207 each carry the phosphoserine modification. Residues isoleucine 2193–serine 2207 show a composition bias toward polar residues. The span at proline 2208 to glutamate 2218 shows a compositional bias: pro residues. The span at lysine 2219–arginine 2229 shows a compositional bias: basic and acidic residues. Residues alanine 2230 to alanine 2244 show a composition bias toward low complexity. Positions alanine 2336 to proline 2345 are enriched in basic and acidic residues. The segment covering leucine 2346–arginine 2355 has biased composition (low complexity). Positions serine 2356–isoleucine 2372 are enriched in basic and acidic residues. Serine 2376 carries the phosphoserine modification. At threonine 2380 the chain carries Phosphothreonine. Residues leucine 2384–glutamine 2395 show a composition bias toward basic and acidic residues. A phosphoserine mark is found at serine 2410, serine 2414, serine 2438, serine 2439, serine 2444, and serine 2448. Over residues arginine 2463–serine 2484 the composition is skewed to low complexity. A compositionally biased stretch (polar residues) spans glutamine 2510–proline 2520. Serine 2521 and serine 2524 each carry phosphoserine. Residues serine 2521–glutamate 2540 show a composition bias toward low complexity. Basic residues predominate over residues serine 2543 to lysine 2554. Serine 2559 is subject to Phosphoserine. One can recognise an Ig-like 8 domain in the interval proline 2583–alanine 2673. An intrachain disulfide couples cysteine 2605 to cysteine 2657. The Fibronectin type-III 2 domain occupies lysine 2680–serine 2774. Residue threonine 2771 is modified to Phosphothreonine. Disordered stretches follow at residues threonine 2771–asparagine 2829 and threonine 2855–proline 2957. Serine 2774 is subject to Phosphoserine. The segment covering arginine 2793–alanine 2810 has biased composition (pro residues). The segment covering serine 2814–alanine 2828 has biased composition (low complexity). One can recognise a Fibronectin type-III 3 domain in the interval glutamate 2859–alanine 2965. Residues glycine 2880–valine 2907 are compositionally biased toward polar residues. Residues proline 2910–proline 2924 are compositionally biased toward pro residues. Residues serine 2940 to arginine 2950 show a composition bias toward polar residues. Serine 2941 bears the Phosphoserine mark. The 253-residue stretch at tyrosine 2958–leucine 3210 folds into the Protein kinase 2 domain. Residues lysine 2964–valine 2972 and lysine 2987 each bind ATP. Aspartate 3077 serves as the catalytic Proton acceptor.

This sequence belongs to the protein kinase superfamily. CAMK Ser/Thr protein kinase family. In terms of assembly, interacts with MTM1. In terms of processing, may be autophosphorylated. In terms of tissue distribution, isoform 2 is highly expressed in differentiated arterial smooth muscle cells (ASMC) in the medial layer of the aorta. Weakly detected in brain and testis and to a lesser extent in organs rich in striated muscle or visceral smooth muscle.

It is found in the nucleus. The enzyme catalyses L-seryl-[protein] + ATP = O-phospho-L-seryl-[protein] + ADP + H(+). It carries out the reaction L-threonyl-[protein] + ATP = O-phospho-L-threonyl-[protein] + ADP + H(+). Functionally, isoform 2 may have a role in regulating the growth and differentiation of arterial smooth muscle cells. This chain is Striated muscle-specific serine/threonine-protein kinase (Speg), found in Rattus norvegicus (Rat).